The sequence spans 296 residues: DNA repair protein complementing XP-A cells homolog (296 aa).

The segment covering 1-10 has biased composition (polar residues); the sequence is MSAEVSTNES. The segment at 1–39 is disordered; sequence MSAEVSTNESAPPAEKKSKLTNAQKARIERNQAKAQKLR. Residues 26-39 show a composition bias toward basic and acidic residues; sequence ARIERNQAKAQKLR. The Nuclear localization signal signature appears at 26–47; sequence ARIERNQAKAQKLREAKLVSHP. Cys-126, Cys-129, Cys-147, and Cys-150 together coordinate Zn(2+). The segment at 126 to 150 is a zinc-finger region; sequence CLECGDMFADSYLFNNFGHSVCDKC.

This sequence belongs to the XPA family. Strongly expressed in the central nervous system and muscles.

The protein resides in the nucleus. In terms of biological role, involved in DNA excision repair. Initiates repair by binding to damaged sites with various affinities, depending on the photoproduct and the transcriptional state of the region. The sequence is that of DNA repair protein complementing XP-A cells homolog (Xpac) from Drosophila melanogaster (Fruit fly).